Here is a 178-residue protein sequence, read N- to C-terminus: Fatty-acid and retinol-binding protein 1 (178 aa).

The signal sequence occupies residues 1–16 (MYHRLILLALIGTTMA). 2 coiled-coil regions span residues 67–89 (DAAL…ELRN) and 130–153 (KQAA…ELKV).

It belongs to the fatty-acid and retinol-binding protein (FARBP) family. Post-translationally, not glycosylated.

The protein resides in the secreted. Its function is as follows. Binds retinol and different fatty acids. This chain is Fatty-acid and retinol-binding protein 1, found in Wuchereria bancrofti.